The chain runs to 433 residues: MKICGLEKFRVFLSLISMVSLLCNGVNGFTIVRSMAVNGESVPDRFSNPSCRPSDCALKRASTTNGCSTTRDCCSCQCSKTRATYLTSPFNRCTTSEYIDEDCSSFFVLPDDSPPPVADITKPGHINFFSETRCHKGLRTRSWSHSVDATSWTTGKPNGFSVELVEGSSSSWKWRLSWQNGMDAKFSGLIIKLEFSCQNTRSGCFLMKSKGNYTIPNSEQWPSIIPTDVSFNLTGENANPTANSGTSARSNRNEQNKMEEPARNQAELEPKKTGVVVAGVTVSLAAGFVLALATLLLMKKKQTSLAVNAKARPNSYLGYEEPVDSAGRPEQTATESPSFDNEFYTTDCVLSLSGNNVGGKVTRMGPLPPLPGEESIYAEPMIKRSVAYQGLAEKNKQQDAGTACNVQPQPECKVIEKTSNENSHDKGTDEDKG.

Residues 1 to 28 (MKICGLEKFRVFLSLISMVSLLCNGVNG) form the signal peptide. Topologically, residues 29 to 274 (FTIVRSMAVN…QAELEPKKTG (246 aa)) are extracellular. Polar residues predominate over residues 235–250 (GENANPTANSGTSARS). The disordered stretch occupies residues 235 to 266 (GENANPTANSGTSARSNRNEQNKMEEPARNQA). Residues 251–266 (NRNEQNKMEEPARNQA) are compositionally biased toward basic and acidic residues. Residues 275-295 (VVVAGVTVSLAAGFVLALATL) traverse the membrane as a helical segment. Residues 296–433 (LLMKKKQTSL…HDKGTDEDKG (138 aa)) are Cytoplasmic-facing. Disordered regions lie at residues 320-340 (EEPV…PSFD) and 413-433 (KVIE…EDKG).

In terms of tissue distribution, component of the acid-insoluble and acid-soluble organic matrix of the aragonitic skeleton (at protein level).

The protein resides in the membrane. This is an uncharacterized protein from Acropora millepora (Staghorn coral).